The chain runs to 293 residues: MLKKIIGIGVSAMLALSLAACGSENDENASAAEQVNKTIIGIDPGSGIMSLTDKAMKDYDLNDWTLISASSAAMTATLKKSYDRKKPIIITGWTPHWMFSRYKLKYLDDPKQSYGSAEEIHTITRKGFSKEQPNAAKLLSQFKWTQDEMGEIMIKVEEGEKPAKVAAEYVNKHKDQIAEWTKGVQKVKGDKINLAYVAWDSEIASTNVIGKVLEDLGYEVTLTQVEAGPMWTAIATGSADASLSAWLPNTHKAYAAKYKGKYDDIGTSMTGVKMGLVVPQYMKNVNSIEDLKK.

A signal peptide spans 1 to 20; sequence MLKKIIGIGVSAMLALSLAA. Cysteine 21 is lipidated: N-palmitoyl cysteine. Cysteine 21 is lipidated: S-diacylglycerol cysteine.

As to quaternary structure, the complex is composed of two ATP-binding proteins (OpuAA), two transmembrane proteins (OpuAB) and a solute-binding protein (OpuAC). Interacts with FloT.

It is found in the cell membrane. It localises to the membrane raft. Functionally, involved in a multicomponent binding-protein-dependent transport system for glycine betaine. This is Glycine betaine-binding protein OpuAC (opuAC) from Bacillus subtilis (strain 168).